Here is a 348-residue protein sequence, read N- to C-terminus: CCN family member 2 (348 aa).

The N-terminal stretch at 1 to 25 (MLASVAGPISLALVLLALCTRPAMG) is a signal peptide. The 72-residue stretch at 26–97 (QDCSAQCQCA…NRKIGVCTAK (72 aa)) folds into the IGFBP N-terminal domain. Cystine bridges form between cysteine 28–cysteine 53, cysteine 32–cysteine 55, cysteine 34–cysteine 56, cysteine 42–cysteine 59, cysteine 67–cysteine 81, and cysteine 73–cysteine 94. A VWFC domain is found at 100–166 (APCVFGGSVY…GKCCEEWVCD (67 aa)). Positions 197 to 242 (NCLVQTTEWSACSKTCGMGISTRVTNDNTFCRLEKQSRLCMVRPCE) constitute a TSP type-1 domain. The heparin-binding stretch occupies residues 246–348 (EENIKKGKKC…YYRKMYGDMA (103 aa)). Cystine bridges form between cysteine 255-cysteine 292, cysteine 272-cysteine 306, cysteine 283-cysteine 322, cysteine 286-cysteine 324, and cysteine 291-cysteine 328. Positions 255–329 (CIRTPKIAKP…KTCACHYNCP (75 aa)) constitute a CTCK domain.

Belongs to the CCN family. As to quaternary structure, monomer. Interacts with TSKU. In terms of tissue distribution, testis, spleen, kidney, lung, heart, and brain (lowest level in testis and highest in lung).

It localises to the secreted. The protein resides in the extracellular space. The protein localises to the extracellular matrix. Functionally, major connective tissue mitoattractant secreted by vascular endothelial cells. Promotes proliferation and differentiation of chondrocytes. Is involved in the stimulation of osteoblast differentiation and has a critical role in osteogenesis. Mediates heparin- and divalent cation-dependent cell adhesion in many cell types including fibroblasts, myofibroblasts, endothelial and epithelial cells. Enhances fibroblast growth factor-induced DNA synthesis. This Mus musculus (Mouse) protein is CCN family member 2.